Consider the following 583-residue polypeptide: MDLLPPKPKYNPLRNESLSSLEEGASGSTPPEELPSPSASSLGPILPPLPGDDSPTTLCSFFPRMSNLRLANPAGGRPGSKGEPGRAADDGEGIVGAAMPDSGPLPLLQDMNKLSGGGGRRTRVEGGQLGGEEWTRHGSFVNKPTRGWLHPNDKVMGPGVSYLVRYMGCVEVLQSMRALDFNTRTQVTREAISLVCEAVPGAKGATRRRKPCSRPLSSILGRSNLKFAGMPITLTVSTSSLNLMAADCKQIIANHHMQSISFASGGDPDTAEYVAYVAKDPVNQRACHILECPEGLAQDVISTIGQAFELRFKQYLRNPPKLVTPHDRMAGFDGSAWDEEEEEPPDHQYYNDFPGKEPPLGGVVDMRLREGAAPGAARPTAPNAQTPSHLGATLPVGQPVGGDPEVRKQMPPPPPCPGRELFDDPSYVNVQNLDKARQAVGGAGPPNPAINGSAPRDLFDMKPFEDALRVPPPPQSVSMAEQLRGEPWFHGKLSRREAEALLQLNGDFLVRESTTTPGQYVLTGLQSGQPKHLLLVDPEGVVRTKDHRFESVSHLISYHMDNHLPIISAGSELCLQQPVERKL.

Met-1 bears the N-acetylmethionine mark. The interval 1–92 (MDLLPPKPKY…EPGRAADDGE (92 aa)) is disordered. A compositionally biased stretch (low complexity) spans 16–44 (ESLSSLEEGASGSTPPEELPSPSASSLGP). Phosphoserine is present on residues Ser-36 and Ser-139. Lys-154 is subject to N6-acetyllysine. Residues 156–339 (MGPGVSYLVR…AGFDGSAWDE (184 aa)) form the PID domain. A CH1 region spans residues 340–487 (EEEEPPDHQY…SMAEQLRGEP (148 aa)). Phosphotyrosine occurs at positions 349 and 350. The span at 372–384 (AAPGAARPTAPNA) shows a compositional bias: low complexity. A disordered region spans residues 372 to 415 (AAPGAARPTAPNAQTPSHLGATLPVGQPVGGDPEVRKQMPPPPP). Tyr-427 is subject to Phosphotyrosine. The residue at position 453 (Ser-453) is a Phosphoserine. The region spanning 488 to 579 (WFHGKLSRRE…GSELCLQQPV (92 aa)) is the SH2 domain.

Interacts with CPNE3; this interaction may mediate the binding of CPNE3 with ERBB2. Interacts with the NPXY motif of tyrosine-phosphorylated IGF1R and INSR in vitro via the PID domain. Once activated, binds to GRB2. Interacts with tyrosine-phosphorylated CD3T and DDR2. Interacts with the N-terminal region of SH2B2. Interacts with phosphorylated LRP1 and IRS4. Interacts with INPP5D/SHIP1 and INPPL1/SHIP2. Interacts with TRIM31. Interacts with PTPN6/SHP (tyrosine phosphorylated). Identified in a complex containing FGFR4, NCAM1, CDH2, PLCG1, FRS2, SRC, SHC1, GAP43 and CTT. Interacts with ALK, GAB2, GRB7 and KIT. Interacts with FLT4 (tyrosine-phosphorylated). Interacts with EPHB1 and GRB2; activates the MAPK/ERK cascade to regulate cell migration. Interacts with PDGFRB (tyrosine-phosphorylated). Interacts with ERBB4. Interacts with TEK/TIE2 (tyrosine-phosphorylated). Interacts with the Trk receptors NTRK1, NTRK2 and NTRK3; in a phosphotyrosine-dependent manner. Interacts with PTK2/FAK1. Interacts with CEACAM1; this interaction is CEACAM1-phosphorylation-dependent and mediates interaction with EGFR or INSR resulting in decrease coupling of SHC1 to the MAPK3/ERK1-MAPK1/ERK2 pathway. Interacts (via PID domain) with PEAK1 (when phosphorylated at 'Tyr-1188'). Found in a complex with PPP1CA, PPP1CC, SHC1 and PEAK1. As to quaternary structure, (Microbial infection) Interacts with herpes simplex virus 1 UL46. In terms of processing, phosphorylated by activated epidermal growth factor receptor. Phosphorylated in response to FLT4 and KIT signaling. Isoform p46Shc and isoform p52Shc are phosphorylated on tyrosine residues of the Pro-rich domain. Isoform p66Shc is phosphorylated on Ser-36 by PRKCB upon treatment with insulin, hydrogen peroxide or irradiation with ultraviolet light. Tyrosine phosphorylated in response to FLT3 signaling. Tyrosine phosphorylated by activated PTK2B/PYK2. Tyrosine phosphorylated by ligand-activated ALK. Tyrosine phosphorylated by ligand-activated PDGFRB. Tyrosine phosphorylated by TEK/TIE2. May be tyrosine phosphorylated by activated PTK2/FAK1; tyrosine phosphorylation was seen in an astrocytoma biopsy, where PTK2/FAK1 kinase activity is high, but not in normal brain tissue. Isoform p52Shc dephosphorylation by PTPN2 may regulate interaction with GRB2. In terms of tissue distribution, widely expressed. Expressed in neural stem cells but absent in mature neurons.

The protein localises to the cytoplasm. Its subcellular location is the cell junction. The protein resides in the focal adhesion. It localises to the mitochondrion matrix. It is found in the mitochondrion. Its function is as follows. Signaling adapter that couples activated growth factor receptors to signaling pathways. Participates in a signaling cascade initiated by activated KIT and KITLG/SCF. Isoform p46Shc and isoform p52Shc, once phosphorylated, couple activated receptor tyrosine kinases to Ras via the recruitment of the GRB2/SOS complex and are implicated in the cytoplasmic propagation of mitogenic signals. Isoform p46Shc and isoform p52Shc may thus function as initiators of the Ras signaling cascade in various non-neuronal systems. Isoform p66Shc does not mediate Ras activation, but is involved in signal transduction pathways that regulate the cellular response to oxidative stress and life span. Isoform p66Shc acts as a downstream target of the tumor suppressor p53 and is indispensable for the ability of stress-activated p53 to induce elevation of intracellular oxidants, cytochrome c release and apoptosis. The expression of isoform p66Shc has been correlated with life span. Participates in signaling downstream of the angiopoietin receptor TEK/TIE2, and plays a role in the regulation of endothelial cell migration and sprouting angiogenesis. The polypeptide is SHC-transforming protein 1 (SHC1) (Homo sapiens (Human)).